Consider the following 203-residue polypeptide: Sec-independent protein translocase protein TatB (203 aa).

Residues 1–21 (MFDIGWTELLVIAVVLIVVVG) form a helical membrane-spanning segment. Positions 179-203 (KPKRTTAVRKPATLKKPAQTKKDEA) are disordered.

Belongs to the TatB family. In terms of assembly, the Tat system comprises two distinct complexes: a TatABC complex, containing multiple copies of TatA, TatB and TatC subunits, and a separate TatA complex, containing only TatA subunits. Substrates initially bind to the TatABC complex, which probably triggers association of the separate TatA complex to form the active translocon.

It is found in the cell inner membrane. Part of the twin-arginine translocation (Tat) system that transports large folded proteins containing a characteristic twin-arginine motif in their signal peptide across membranes. Together with TatC, TatB is part of a receptor directly interacting with Tat signal peptides. TatB may form an oligomeric binding site that transiently accommodates folded Tat precursor proteins before their translocation. This is Sec-independent protein translocase protein TatB from Rhizobium johnstonii (strain DSM 114642 / LMG 32736 / 3841) (Rhizobium leguminosarum bv. viciae).